The following is a 724-amino-acid chain: ATPase family protein 2 homolog (724 aa).

ATP-binding positions include 281–287 (PGSGKTL) and 503–508 (GCSKTL).

Belongs to the AAA ATPase family. AFG2 subfamily. As to quaternary structure, homohexamer; ATP binding induces oligomerization. Forms a ring-shaped particle of about 12 nm diameter, that displays 6-fold radial symmetry. Interacts (via N-terminus) with kinase air-2; the interaction is direct and inhibits air-2 kinase activity in an ATPase-dependent manner.

It localises to the cytoplasm. The enzyme catalyses ATP + H2O = ADP + phosphate + H(+). ATP-dependent chaperone which uses the energy provided by ATP hydrolysis to generate mechanical force to disassemble protein complexes. Required for various steps of embryonic mitosis including centrosome duplication, spindle assembly, ER dynamics and cell cycle progression. Regulates the stability and activity of kinase air-2, a component of the chromosomal passenger complex (CPC). Inhibits air-2 kinase activity from metaphase to late telophase and negatively regulates air-2 stability during mitotic exit. Controls ER transition into sheet-like structures at the onset of mitosis, possibly by regulating homotypic membrane fusion. In Caenorhabditis elegans, this protein is ATPase family protein 2 homolog.